The chain runs to 198 residues: Carnitine operon protein CaiE (198 aa).

The tract at residues Val-179–Gln-198 is disordered. Over residues Glu-180–Gln-198 the composition is skewed to basic and acidic residues.

The protein belongs to the transferase hexapeptide repeat family.

It functions in the pathway amine and polyamine metabolism; carnitine metabolism. In terms of biological role, overproduction of CaiE stimulates the activity of CaiB and CaiD. The polypeptide is Carnitine operon protein CaiE (Salmonella typhi).